Consider the following 164-residue polypeptide: uncharacterized protein (164 aa).

An N-terminal signal peptide occupies residues 1-25; the sequence is MMKTVKHLLCCAIAASALISTGVHA.

This is an uncharacterized protein from Escherichia coli (strain K12).